Consider the following 353-residue polypeptide: Pleckstrin-2 (353 aa).

Position 1 is an N-acetylmethionine (M1). Residues 4–104 (GVLKEGFLVK…WAFEITGAIH (101 aa)) form the PH 1 domain. A Phosphoserine modification is found at S120. Residues 139 to 225 (SNTGIRSSPN…DSTALYTFAE (87 aa)) enclose the DEP domain. Residues 247-353 (TVVKQGYLAK…EWIEAIKKLT (107 aa)) enclose the PH 2 domain.

The protein localises to the cell projection. The protein resides in the lamellipodium membrane. Its subcellular location is the cytoplasm. It is found in the cytoskeleton. May help orchestrate cytoskeletal arrangement. Contribute to lamellipodia formation. The polypeptide is Pleckstrin-2 (PLEK2) (Homo sapiens (Human)).